Reading from the N-terminus, the 494-residue chain is Alpha-amylase A (494 aa).

A signal peptide spans 1–18; that stretch reads MFLAKSLVCLALLAVANA. A Pyrrolidone carboxylic acid modification is found at glutamine 19. A disulfide bridge connects residues cysteine 46 and cysteine 102. Ca(2+)-binding residues include asparagine 116, arginine 165, and aspartate 174. A disulfide bridge connects residues cysteine 153 and cysteine 167. Arginine 202 contributes to the chloride binding site. Aspartate 204 acts as the Nucleophile in catalysis. Position 208 (histidine 208) interacts with Ca(2+). Glutamate 241 (proton donor) is an active-site residue. 2 residues coordinate chloride: asparagine 304 and arginine 343. Disulfide bonds link cysteine 376/cysteine 382 and cysteine 448/cysteine 460.

The protein belongs to the glycosyl hydrolase 13 family. As to quaternary structure, monomer. Ca(2+) serves as cofactor. Requires chloride as cofactor.

It catalyses the reaction Endohydrolysis of (1-&gt;4)-alpha-D-glucosidic linkages in polysaccharides containing three or more (1-&gt;4)-alpha-linked D-glucose units.. The protein is Alpha-amylase A (Amy-d) of Drosophila mauritiana (Fruit fly).